The following is a 243-amino-acid chain: Type III pantothenate kinase (243 aa).

Aspartate 6–lysine 13 is a binding site for ATP. Residue glycine 101–isoleucine 104 coordinates substrate. Aspartate 103 functions as the Proton acceptor in the catalytic mechanism. Threonine 125 serves as a coordination point for ATP. Threonine 176 is a binding site for substrate.

Belongs to the type III pantothenate kinase family. Homodimer. It depends on NH4(+) as a cofactor. The cofactor is K(+).

It is found in the cytoplasm. The enzyme catalyses (R)-pantothenate + ATP = (R)-4'-phosphopantothenate + ADP + H(+). It functions in the pathway cofactor biosynthesis; coenzyme A biosynthesis; CoA from (R)-pantothenate: step 1/5. Functionally, catalyzes the phosphorylation of pantothenate (Pan), the first step in CoA biosynthesis. The chain is Type III pantothenate kinase from Mycoplasma mobile (strain ATCC 43663 / 163K / NCTC 11711) (Mesomycoplasma mobile).